The primary structure comprises 388 residues: Succinate--CoA ligase [ADP-forming] subunit beta (388 aa).

The region spanning 9 to 244 (KEILRKFGVA…LDEEDPAEIE (236 aa)) is the ATP-grasp domain. Residues K46, 53-55 (GRG), E99, A102, and E107 contribute to the ATP site. Positions 199 and 213 each coordinate Mg(2+). Substrate contacts are provided by residues N264 and 321-323 (GIM).

Belongs to the succinate/malate CoA ligase beta subunit family. Heterotetramer of two alpha and two beta subunits. Requires Mg(2+) as cofactor.

It catalyses the reaction succinate + ATP + CoA = succinyl-CoA + ADP + phosphate. The enzyme catalyses GTP + succinate + CoA = succinyl-CoA + GDP + phosphate. The protein operates within carbohydrate metabolism; tricarboxylic acid cycle; succinate from succinyl-CoA (ligase route): step 1/1. Succinyl-CoA synthetase functions in the citric acid cycle (TCA), coupling the hydrolysis of succinyl-CoA to the synthesis of either ATP or GTP and thus represents the only step of substrate-level phosphorylation in the TCA. The beta subunit provides nucleotide specificity of the enzyme and binds the substrate succinate, while the binding sites for coenzyme A and phosphate are found in the alpha subunit. The sequence is that of Succinate--CoA ligase [ADP-forming] subunit beta from Burkholderia thailandensis (strain ATCC 700388 / DSM 13276 / CCUG 48851 / CIP 106301 / E264).